The chain runs to 102 residues: Small ribosomal subunit protein uS10 (102 aa).

Belongs to the universal ribosomal protein uS10 family. In terms of assembly, part of the 30S ribosomal subunit.

Its function is as follows. Involved in the binding of tRNA to the ribosomes. This chain is Small ribosomal subunit protein uS10, found in Paracoccus denitrificans (strain Pd 1222).